A 273-amino-acid chain; its full sequence is Formamidopyrimidine-DNA glycosylase (273 aa).

Proline 2 (schiff-base intermediate with DNA) is an active-site residue. Residue glutamate 3 is the Proton donor of the active site. Lysine 58 functions as the Proton donor; for beta-elimination activity in the catalytic mechanism. DNA is bound by residues histidine 91 and arginine 110. The FPG-type zinc finger occupies 238-272 (QVYGKTGQPCPRCASMIVKIKLGGRGTHLCPHCQK). The active-site Proton donor; for delta-elimination activity is the arginine 262.

This sequence belongs to the FPG family. Monomer. Zn(2+) serves as cofactor.

The catalysed reaction is Hydrolysis of DNA containing ring-opened 7-methylguanine residues, releasing 2,6-diamino-4-hydroxy-5-(N-methyl)formamidopyrimidine.. The enzyme catalyses 2'-deoxyribonucleotide-(2'-deoxyribose 5'-phosphate)-2'-deoxyribonucleotide-DNA = a 3'-end 2'-deoxyribonucleotide-(2,3-dehydro-2,3-deoxyribose 5'-phosphate)-DNA + a 5'-end 5'-phospho-2'-deoxyribonucleoside-DNA + H(+). Involved in base excision repair of DNA damaged by oxidation or by mutagenic agents. Acts as a DNA glycosylase that recognizes and removes damaged bases. Has a preference for oxidized purines, such as 7,8-dihydro-8-oxoguanine (8-oxoG). Has AP (apurinic/apyrimidinic) lyase activity and introduces nicks in the DNA strand. Cleaves the DNA backbone by beta-delta elimination to generate a single-strand break at the site of the removed base with both 3'- and 5'-phosphates. This is Formamidopyrimidine-DNA glycosylase from Streptococcus thermophilus (strain ATCC BAA-250 / LMG 18311).